The chain runs to 389 residues: RHOMBOID-like protein 1 (389 aa).

7 consecutive transmembrane segments (helical) span residues 56 to 76 (PWLV…SMFI), 136 to 156 (IWLH…IFIG), 163 to 183 (FGFV…SLLS), 191 to 211 (ISVG…SELL), 221 to 241 (FAAL…GILP), 244 to 264 (DNFA…VFLI), and 295 to 315 (VLWI…LVVL). The active-site Nucleophile is serine 196. Histidine 248 acts as the Charge relay system in catalysis.

This sequence belongs to the peptidase S54 family. In terms of tissue distribution, expressed in roots, seedlings, leaves, stems and flowers.

Its subcellular location is the golgi apparatus membrane. The catalysed reaction is Cleaves type-1 transmembrane domains using a catalytic dyad composed of serine and histidine that are contributed by different transmembrane domains.. Probable rhomboid-type serine protease that catalyzes intramembrane proteolysis. Unable to cleave the Drosophila protein Spitz. The sequence is that of RHOMBOID-like protein 1 from Arabidopsis thaliana (Mouse-ear cress).